The sequence spans 39 residues: U1-nemetoxin-Csp1c (39 aa).

4 disulfides stabilise this stretch: cysteine 1-cysteine 15, cysteine 8-cysteine 19, cysteine 14-cysteine 36, and cysteine 25-cysteine 32.

Expressed by the venom gland.

Its subcellular location is the secreted. Its function is as follows. Causes paralysis to insect larvae (H.virescens). This toxin is active only on insects. The polypeptide is U1-nemetoxin-Csp1c (Calisoga sp. (Spider)).